The chain runs to 79 residues: MGLKGAWCFPWCGCRRQRGTERGAGLSPAAPPDPSPAIAPTMAEGGVPSPGPGAYFSRKARLSFRHQLHDIASANDSTI.

The tract at residues T20–P52 is disordered.

This is an uncharacterized protein from Homo sapiens (Human).